The primary structure comprises 287 residues: Elongation factor Ts (287 aa).

The interval 80–83 (TDFL) is involved in Mg(2+) ion dislocation from EF-Tu.

It belongs to the EF-Ts family.

The protein localises to the cytoplasm. Functionally, associates with the EF-Tu.GDP complex and induces the exchange of GDP to GTP. It remains bound to the aminoacyl-tRNA.EF-Tu.GTP complex up to the GTP hydrolysis stage on the ribosome. The protein is Elongation factor Ts of Pseudomonas savastanoi pv. phaseolicola (strain 1448A / Race 6) (Pseudomonas syringae pv. phaseolicola (strain 1448A / Race 6)).